The following is a 153-amino-acid chain: 3-hydroxyacyl-[acyl-carrier-protein] dehydratase FabZ (153 aa).

His56 is an active-site residue.

Belongs to the thioester dehydratase family. FabZ subfamily.

It is found in the cytoplasm. The catalysed reaction is a (3R)-hydroxyacyl-[ACP] = a (2E)-enoyl-[ACP] + H2O. In terms of biological role, involved in unsaturated fatty acids biosynthesis. Catalyzes the dehydration of short chain beta-hydroxyacyl-ACPs and long chain saturated and unsaturated beta-hydroxyacyl-ACPs. This is 3-hydroxyacyl-[acyl-carrier-protein] dehydratase FabZ from Nitrosomonas europaea (strain ATCC 19718 / CIP 103999 / KCTC 2705 / NBRC 14298).